A 423-amino-acid polypeptide reads, in one-letter code: Pleckstrin homology domain-containing family O member 1 (423 aa).

3 disordered regions span residues 1–21 (MEKN…SAQP), 81–100 (RKSK…AHSR), and 217–277 (LAAG…HSEK). Residues 7–20 (AKRGQQDGNQQSAQ) are compositionally biased toward polar residues. Residues 20 to 131 (QPEKVGWVRK…WINALNSAIT (112 aa)) enclose the PH domain. Residues 83–92 (SKSRSKKNHS) show a composition bias toward basic residues. The span at 222-259 (RRSDSENVKLSEKGRSGTLPRHEVTSWDKPTQRKDSLD) shows a compositional bias: basic and acidic residues.

In terms of processing, C-terminal fragments could be released during apoptosis via caspase-3-dependent cleavage.

The protein localises to the membrane. Its subcellular location is the nucleus. It is found in the cytoplasm. Plays a role in the regulation of the actin cytoskeleton through its interactions with actin capping protein (CP). This chain is Pleckstrin homology domain-containing family O member 1 (PLEKHO1), found in Gallus gallus (Chicken).